Here is a 166-residue protein sequence, read N- to C-terminus: Regulator of ribonuclease activity A (166 aa).

Belongs to the RraA family. As to quaternary structure, homotrimer. Binds to both RNA-binding sites in the C-terminal region of Rne and to RhlB.

It localises to the cytoplasm. Its function is as follows. Globally modulates RNA abundance by binding to RNase E (Rne) and regulating its endonucleolytic activity. Can modulate Rne action in a substrate-dependent manner by altering the composition of the degradosome. Modulates RNA-binding and helicase activities of the degradosome. In Pasteurella multocida (strain Pm70), this protein is Regulator of ribonuclease activity A.